We begin with the raw amino-acid sequence, 206 residues long: Ribosomal RNA large subunit methyltransferase E (206 aa).

The S-adenosyl-L-methionine site is built by G61, W63, D81, D97, and D122. K162 (proton acceptor) is an active-site residue.

It belongs to the class I-like SAM-binding methyltransferase superfamily. RNA methyltransferase RlmE family.

It is found in the cytoplasm. The catalysed reaction is uridine(2552) in 23S rRNA + S-adenosyl-L-methionine = 2'-O-methyluridine(2552) in 23S rRNA + S-adenosyl-L-homocysteine + H(+). Functionally, specifically methylates the uridine in position 2552 of 23S rRNA at the 2'-O position of the ribose in the fully assembled 50S ribosomal subunit. The sequence is that of Ribosomal RNA large subunit methyltransferase E from Neisseria meningitidis serogroup C (strain 053442).